Reading from the N-terminus, the 284-residue chain is NADPH-dependent 7-cyano-7-deazaguanine reductase (284 aa).

I91 to S93 contributes to the substrate binding site. An NADPH-binding site is contributed by S93 to K94. Residue C192 is the Thioimide intermediate of the active site. The Proton donor role is filled by D199. Residue H231–E232 participates in substrate binding. R260–G261 provides a ligand contact to NADPH.

This sequence belongs to the GTP cyclohydrolase I family. QueF type 2 subfamily. Homodimer.

The protein localises to the cytoplasm. The enzyme catalyses 7-aminomethyl-7-carbaguanine + 2 NADP(+) = 7-cyano-7-deazaguanine + 2 NADPH + 3 H(+). It functions in the pathway tRNA modification; tRNA-queuosine biosynthesis. Catalyzes the NADPH-dependent reduction of 7-cyano-7-deazaguanine (preQ0) to 7-aminomethyl-7-deazaguanine (preQ1). This Shewanella denitrificans (strain OS217 / ATCC BAA-1090 / DSM 15013) protein is NADPH-dependent 7-cyano-7-deazaguanine reductase.